The primary structure comprises 279 residues: Probable autolysin LDP (279 aa).

Residues 1-24 (MKKSLTVTVSSVLAFLALNNAAHA) form the signal peptide. The LysM domain maps to 51-94 (TTYTVVAGDSLYKIALEHHLTLNQLYSYNPGVTPLIFPGDVISL). The Peptidase C51 domain maps to 158 to 279 (VPTVPVAHNY…LNPGKYNYIH (122 aa)).

It carries out the reaction Hydrolyzes the link between N-acetylmuramoyl residues and L-amino acid residues in certain cell-wall glycopeptides.. In terms of biological role, has weak lytic activity toward S.aureus cells. In Staphylococcus aureus (strain NCTC 8325 / PS 47), this protein is Probable autolysin LDP.